The following is a 379-amino-acid chain: 8-amino-7-oxononanoate synthase (379 aa).

Residues arginine 27 and arginine 34 each contribute to the substrate site. 114–115 (GY) is a pyridoxal 5'-phosphate binding site. Residue histidine 139 coordinates substrate. Pyridoxal 5'-phosphate is bound by residues serine 187, 212-215 (DDAH), and 232-235 (TLSK). N6-(pyridoxal phosphate)lysine is present on lysine 235. Threonine 344 is a substrate binding site.

The protein belongs to the class-II pyridoxal-phosphate-dependent aminotransferase family. BioF subfamily. As to quaternary structure, homodimer. It depends on pyridoxal 5'-phosphate as a cofactor.

The enzyme catalyses 6-carboxyhexanoyl-[ACP] + L-alanine + H(+) = (8S)-8-amino-7-oxononanoate + holo-[ACP] + CO2. It functions in the pathway cofactor biosynthesis; biotin biosynthesis. Catalyzes the decarboxylative condensation of pimeloyl-[acyl-carrier protein] and L-alanine to produce 8-amino-7-oxononanoate (AON), [acyl-carrier protein], and carbon dioxide. This chain is 8-amino-7-oxononanoate synthase, found in Methylobacterium nodulans (strain LMG 21967 / CNCM I-2342 / ORS 2060).